Consider the following 298-residue polypeptide: UDP-N-acetylenolpyruvoylglucosamine reductase (298 aa).

The FAD-binding PCMH-type domain maps to lysine 26 to glycine 191. The active site involves arginine 170. Residue serine 220 is the Proton donor of the active site. Residue glutamate 290 is part of the active site.

Belongs to the MurB family. Requires FAD as cofactor.

It is found in the cytoplasm. It carries out the reaction UDP-N-acetyl-alpha-D-muramate + NADP(+) = UDP-N-acetyl-3-O-(1-carboxyvinyl)-alpha-D-glucosamine + NADPH + H(+). It participates in cell wall biogenesis; peptidoglycan biosynthesis. Its function is as follows. Cell wall formation. The sequence is that of UDP-N-acetylenolpyruvoylglucosamine reductase from Lactobacillus helveticus (strain DPC 4571).